The primary structure comprises 649 residues: Protein phosphatase Slingshot homolog 3 (649 aa).

Positions 1–20 (MALVTVSRSPPASGHSTPVG) are enriched in polar residues. Positions 1–32 (MALVTVSRSPPASGHSTPVGPTQDRVVRRRGR) are disordered. The residue at position 2 (Ala-2) is an N-acetylalanine. Residues Ser-9 and Ser-38 each carry the phosphoserine modification. Residues 49–90 (LQDGGDSNVASEADSEPMEEPSGEEQPTEDQTDKGQGLQSPW) are disordered. Residues 61–78 (ADSEPMEEPSGEEQPTED) show a composition bias toward acidic residues. A Phosphoserine modification is found at Ser-88. Residues 266–321 (EKMEQAILAELWQVLDTSDLDSVTSKEIRQALELRLGCPLQQYRDFIDNQMLLLMA) enclose the DEK-C domain. One can recognise a Tyrosine-protein phosphatase domain in the interval 325 to 466 (RASRIFPHLY…LRTYQGILTA (142 aa)). Cys-410 (phosphocysteine intermediate) is an active-site residue. Low complexity-rich tracts occupy residues 541–551 (LEPSESESTPE) and 608–627 (TRAF…GMSS). 2 disordered regions span residues 541–586 (LEPS…KGPW) and 608–649 (TRAF…EDKA). Basic and acidic residues predominate over residues 639–649 (SVDDSREEDKA).

It belongs to the protein-tyrosine phosphatase family. Does not bind to, or colocalize with, filamentous actin. Expressed in brain, small intestine and testis. Also expressed at lower levels in heart, kidney, liver, spleen and thymus.

It is found in the cytoplasm. It localises to the cytoskeleton. The protein resides in the nucleus. The enzyme catalyses O-phospho-L-tyrosyl-[protein] + H2O = L-tyrosyl-[protein] + phosphate. It carries out the reaction O-phospho-L-seryl-[protein] + H2O = L-seryl-[protein] + phosphate. The catalysed reaction is O-phospho-L-threonyl-[protein] + H2O = L-threonyl-[protein] + phosphate. In terms of biological role, protein phosphatase which may play a role in the regulation of actin filament dynamics. Can dephosphorylate and activate the actin binding/depolymerizing factor cofilin, which subsequently binds to actin filaments and stimulates their disassembly. This chain is Protein phosphatase Slingshot homolog 3 (Ssh3), found in Mus musculus (Mouse).